The sequence spans 56 residues: uncharacterized protein (56 aa).

Belongs to the archaeal ATPase family.

This is an uncharacterized protein from Methanocaldococcus jannaschii (strain ATCC 43067 / DSM 2661 / JAL-1 / JCM 10045 / NBRC 100440) (Methanococcus jannaschii).